The chain runs to 435 residues: uncharacterized protein (435 aa).

The protein belongs to the herpesviridae UL49 family.

This is an uncharacterized protein from Saimiriine herpesvirus 2 (strain 11) (SaHV-2).